The chain runs to 1058 residues: Ubiquitin-like modifier-activating enzyme 1 (1058 aa).

Positions 1-47 (MSSSPLSKKRRVSGPDPKPGSNCSPAQSVLPQVPSAPTNGMAKNGSE) are disordered. Ser2 bears the N-acetylserine mark. 5 positions are modified to phosphoserine: Ser4, Ser13, Ser21, Ser24, and Ser46. Residues 21–38 (SNCSPAQSVLPQVPSAPT) show a composition bias toward polar residues. Residue Tyr55 is modified to Phosphotyrosine. 2 tandem repeats follow at residues 63 to 199 (GHEA…GQLF) and 459 to 611 (GSDL…QVVI). The 2 approximate repeats stretch occupies residues 63–611 (GHEAMKRLQT…GTKGNVQVVI (549 aa)). Residues Ala478, Asp504, Arg515, Lys528, and 576 to 577 (DN) contribute to the ATP site. Lys528 is modified (N6-succinyllysine). Cys632 acts as the Glycyl thioester intermediate in catalysis. Lys671 is subject to N6-acetyllysine. The residue at position 800 (Thr800) is a Phosphothreonine. Ser810, Ser816, Ser820, and Ser835 each carry phosphoserine. Residue Lys980 is modified to N6-acetyllysine.

Belongs to the ubiquitin-activating E1 family. As to quaternary structure, monomer. As to expression, ubiquitous.

It localises to the cytoplasm. It is found in the mitochondrion. The protein resides in the nucleus. It carries out the reaction ATP + ubiquitin + [E1 ubiquitin-activating enzyme]-L-cysteine = AMP + diphosphate + S-ubiquitinyl-[E1 ubiquitin-activating enzyme]-L-cysteine.. It functions in the pathway protein modification; protein ubiquitination. Catalyzes the first step in ubiquitin conjugation to mark cellular proteins for degradation through the ubiquitin-proteasome system. Activates ubiquitin by first adenylating its C-terminal glycine residue with ATP, and thereafter linking this residue to the side chain of a cysteine residue in E1, yielding a ubiquitin-E1 thioester and free AMP. Essential for the formation of radiation-induced foci, timely DNA repair and for response to replication stress. Promotes the recruitment of TP53BP1 and BRCA1 at DNA damage sites. In Oryctolagus cuniculus (Rabbit), this protein is Ubiquitin-like modifier-activating enzyme 1 (UBA1).